Consider the following 382-residue polypeptide: ATP phosphoribosyltransferase regulatory subunit (382 aa).

The protein belongs to the class-II aminoacyl-tRNA synthetase family. HisZ subfamily. Heteromultimer composed of HisG and HisZ subunits.

The protein resides in the cytoplasm. It functions in the pathway amino-acid biosynthesis; L-histidine biosynthesis; L-histidine from 5-phospho-alpha-D-ribose 1-diphosphate: step 1/9. Required for the first step of histidine biosynthesis. May allow the feedback regulation of ATP phosphoribosyltransferase activity by histidine. The polypeptide is ATP phosphoribosyltransferase regulatory subunit (Acidovorax sp. (strain JS42)).